The primary structure comprises 292 residues: 33 kDa chaperonin (292 aa).

Intrachain disulfides connect Cys-230/Cys-232 and Cys-263/Cys-266.

It belongs to the HSP33 family. Under oxidizing conditions two disulfide bonds are formed involving the reactive cysteines. Under reducing conditions zinc is bound to the reactive cysteines and the protein is inactive.

The protein resides in the cytoplasm. Its function is as follows. Redox regulated molecular chaperone. Protects both thermally unfolding and oxidatively damaged proteins from irreversible aggregation. Plays an important role in the bacterial defense system toward oxidative stress. The protein is 33 kDa chaperonin of Shigella dysenteriae serotype 1 (strain Sd197).